The sequence spans 71 residues: Large ribosomal subunit protein uL29 (71 aa).

The disordered stretch occupies residues 32-51 (GVNKSTGGAPSNPGKISETK).

It belongs to the universal ribosomal protein uL29 family.

This Methanococcus maripaludis (strain DSM 14266 / JCM 13030 / NBRC 101832 / S2 / LL) protein is Large ribosomal subunit protein uL29.